We begin with the raw amino-acid sequence, 68 residues long: Conotoxin Lt5.2 (68 aa).

The N-terminal stretch at 1–19 is a signal peptide; sequence MLCLPVFIILLLLASPAAP. Residues 20–54 constitute a propeptide that is removed on maturation; it reads KSLETRIQNDLIRAGLTDADLKTEKGFLSGLLNVA.

Belongs to the conotoxin T superfamily. Post-translationally, contains 2 disulfide bonds that can be either 'C1-C3, C2-C4' or 'C1-C4, C2-C3', since these disulfide connectivities have been observed for conotoxins with cysteine framework V (for examples, see AC P0DQQ7 and AC P81755). Expressed by the venom duct.

It is found in the secreted. The polypeptide is Conotoxin Lt5.2 (Conus litteratus (Lettered cone)).